The primary structure comprises 85 residues: Major outer membrane protein 1 (85 aa).

The N-terminal stretch at 1 to 18 (MEAREVEEMRRSRLLTLG) is a signal peptide. Residues 22–42 (YTAVIALAALVLVMGALGLVL) form a helical membrane-spanning segment.

Forms extremely stable complexes with apparent masses of 150, 50, 45 and 38 kDa. Found in a ring-shaped complex of 7 nm diameter with a 2 nm channel through the middle. Complete denaturation requires temperatures over 110 degrees Celsius.

It localises to the cell outer membrane. The most abundant protein of the outer membrane, it forms a pore through it. The chain is Major outer membrane protein 1 (ihomp1) from Ignicoccus hospitalis (strain KIN4/I / DSM 18386 / JCM 14125).